The sequence spans 400 residues: Protein transport protein HofC homolog (400 aa).

The next 3 helical transmembrane spans lie at Y165–L185, L209–I229, and L370–F390.

It belongs to the GSP F family.

Its subcellular location is the cell inner membrane. The chain is Protein transport protein HofC homolog (hofC) from Escherichia coli (strain K12).